Consider the following 497-residue polypeptide: NADH-quinone oxidoreductase subunit N (497 aa).

Helical transmembrane passes span 12 to 32 (MAPE…DLAL), 40 to 60 (PLAW…AAMI), 80 to 100 (AFKF…AEWA), 116 to 136 (LFAL…TLFV), 166 to 186 (VING…VFGL), 208 to 228 (LALA…TVPF), 240 to 260 (PVPA…ALLL), 284 to 304 (MQPI…VVAL), 316 to 336 (SGIA…WAMI), 341 to 361 (MYLL…AHIV), 383 to 403 (AAAL…AGFI), 430 to 450 (TVIS…RPTF), and 457 to 477 (LPAG…AIGW).

Belongs to the complex I subunit 2 family. In terms of assembly, NDH-1 is composed of 14 different subunits. Subunits NuoA, H, J, K, L, M, N constitute the membrane sector of the complex.

The protein localises to the cell membrane. It catalyses the reaction a quinone + NADH + 5 H(+)(in) = a quinol + NAD(+) + 4 H(+)(out). Its function is as follows. NDH-1 shuttles electrons from NADH, via FMN and iron-sulfur (Fe-S) centers, to quinones in the respiratory chain. The immediate electron acceptor for the enzyme in this species is believed to be a menaquinone. Couples the redox reaction to proton translocation (for every two electrons transferred, four hydrogen ions are translocated across the cytoplasmic membrane), and thus conserves the redox energy in a proton gradient. This chain is NADH-quinone oxidoreductase subunit N, found in Geobacillus kaustophilus (strain HTA426).